Here is a 1012-residue protein sequence, read N- to C-terminus: PHD finger protein 20 (1012 aa).

Tudor domains follow at residues 4–69 (HPPN…RPLE) and 83–147 (GSSE…GNAR). Positions 142–336 (IVGNARPKET…RSSRLSTNGT (195 aa)) are disordered. A compositionally biased stretch (basic and acidic residues) spans 147 to 245 (RPKETDHKSL…QVDKKPENDI (99 aa)). Ser-159 carries the post-translational modification Phosphoserine. Positions 257 to 269 (KRKRGRPPSIAPT) form a DNA-binding region, a.T hook. Positions 271–280 (VDSNSQTLQP) are enriched in polar residues. A compositionally biased stretch (basic and acidic residues) spans 297–325 (PLKRPRLDKNSSQEKSKNYSENTDKDLSR). A C2H2-type zinc finger spans residues 452–477 (FRCKVVDCLKFFRKAKLLHYHMKYFH). The segment covering 481-490 (KSLEPEESPG) has biased composition (basic and acidic residues). Positions 481-611 (KSLEPEESPG…KGKVKALEED (131 aa)) are disordered. The residue at position 488 (Ser-488) is a Phosphoserine. Over residues 497–509 (RGPSASDKPSQET) the composition is skewed to polar residues. Residues 522–538 (TKDKEKNKEKKFKEFVR) are compositionally biased toward basic and acidic residues. Residues 539 to 551 (VKPKKKKKKKKKT) are compositionally biased toward basic residues. The PHD-type zinc-finger motif lies at 654–700 (RCICEVQEENDFMIQCEECQCWQHGVCMGLLEENVPEKYTCYVCQDP). N6-acetyllysine is present on Lys-843. The tract at residues 866–912 (DAVNPLHENGDDSLSPRLGWPLDQDRSKGDSDPKPGSPKVKEYVSKK) is disordered. A phosphoserine mark is found at Ser-878 and Ser-880. Residues 888-912 (DQDRSKGDSDPKPGSPKVKEYVSKK) are compositionally biased toward basic and acidic residues.

Homodimer; disulfide-linked. Component of some MLL1/MLL complex, at least composed of the core components KMT2A/MLL1, ASH2L, HCFC1, WDR5 and RBBP5, as well as the facultative components BACC1, CHD8, E2F6, HSP70, INO80C, KANSL1, LAS1L, MAX, MCRS1, MGA, KAT8/MOF, PELP1, PHF20, PRP31, RING2, RUVB1/TIP49A, RUVB2/TIP49B, SENP3, TAF1, TAF4, TAF6, TAF7, TAF9 and TEX10. Component of the NSL complex at least composed of MOF/KAT8, KANSL1, KANSL2, KANSL3, MCRS1, PHF20, OGT1/OGT, WDR5 and HCFC1. In terms of processing, ubiquitinated by TRIM26; leading to proteasomal degradation. In terms of tissue distribution, expressed in heart, kidney, liver, lung, pancreas, placenta, spleen and testis. Not expressed in brain, skeletal muscle, colon, ovary, prostate, small intestine and thymus. Expressed in colon and ovary cancer cell lines while it is not expressed in the respective normal tissues.

The protein localises to the nucleus. Methyllysine-binding protein, component of the MOF histone acetyltransferase protein complex. Not required for maintaining the global histone H4 'Lys-16' acetylation (H4K16ac) levels or locus specific histone acetylation, but instead works downstream in transcriptional regulation of MOF target genes. As part of the NSL complex it may be involved in acetylation of nucleosomal histone H4 on several lysine residues. Contributes to methyllysine-dependent p53/TP53 stabilization and up-regulation after DNA damage. This Homo sapiens (Human) protein is PHD finger protein 20 (PHF20).